The chain runs to 177 residues: Adenine phosphoribosyltransferase (177 aa).

Belongs to the purine/pyrimidine phosphoribosyltransferase family. In terms of assembly, homodimer.

It localises to the cytoplasm. It carries out the reaction AMP + diphosphate = 5-phospho-alpha-D-ribose 1-diphosphate + adenine. The protein operates within purine metabolism; AMP biosynthesis via salvage pathway; AMP from adenine: step 1/1. Catalyzes a salvage reaction resulting in the formation of AMP, that is energically less costly than de novo synthesis. This chain is Adenine phosphoribosyltransferase, found in Pelodictyon phaeoclathratiforme (strain DSM 5477 / BU-1).